The chain runs to 402 residues: uncharacterized protein (402 aa).

Residues 332 to 402 (MFSSSSSSSE…PEPPPGKPGR (71 aa)) form a disordered region. Residues 370–379 (SETTSLQQYS) are compositionally biased toward polar residues. The span at 393 to 402 (PEPPPGKPGR) shows a compositional bias: pro residues.

This is an uncharacterized protein from Mus musculus (Mouse).